The primary structure comprises 383 residues: S-adenosylmethionine synthase (383 aa).

Residue H15 coordinates ATP. Position 17 (D17) interacts with Mg(2+). E43 lines the K(+) pocket. 2 residues coordinate L-methionine: E56 and Q99. The tract at residues 99-109 (QSPDINQGVDR) is flexible loop. ATP contacts are provided by residues 164–166 (DAK), 230–231 (RF), D239, 245–246 (RK), A262, and K266. Residue D239 participates in L-methionine binding. Residue K270 coordinates L-methionine.

The protein belongs to the AdoMet synthase family. As to quaternary structure, homotetramer; dimer of dimers. Mg(2+) is required as a cofactor. The cofactor is K(+).

It localises to the cytoplasm. It carries out the reaction L-methionine + ATP + H2O = S-adenosyl-L-methionine + phosphate + diphosphate. The protein operates within amino-acid biosynthesis; S-adenosyl-L-methionine biosynthesis; S-adenosyl-L-methionine from L-methionine: step 1/1. Functionally, catalyzes the formation of S-adenosylmethionine (AdoMet) from methionine and ATP. The overall synthetic reaction is composed of two sequential steps, AdoMet formation and the subsequent tripolyphosphate hydrolysis which occurs prior to release of AdoMet from the enzyme. In Shewanella amazonensis (strain ATCC BAA-1098 / SB2B), this protein is S-adenosylmethionine synthase.